The chain runs to 326 residues: ATP synthase gamma chain (326 aa).

Belongs to the ATPase gamma chain family. As to quaternary structure, F-type ATPases have 2 components, CF(1) - the catalytic core - and CF(0) - the membrane proton channel. CF(1) has five subunits: alpha(3), beta(3), gamma(1), delta(1), epsilon(1). CF(0) has three main subunits: a, b and c.

Its subcellular location is the cell membrane. Produces ATP from ADP in the presence of a proton gradient across the membrane. The gamma chain is believed to be important in regulating ATPase activity and the flow of protons through the CF(0) complex. This Rhodococcus opacus (strain B4) protein is ATP synthase gamma chain.